We begin with the raw amino-acid sequence, 733 residues long: Probable Rho-GTPase-activating protein 6 (733 aa).

Residues 116 to 125 (VFNESKSSSP) are compositionally biased toward polar residues. The disordered stretch occupies residues 116–135 (VFNESKSSSPPDAHTDKYFT). Thr-141 carries the post-translational modification Phosphothreonine. The tract at residues 174 to 256 (RFDKPSNNGP…SKGSWSSILR (83 aa)) is disordered. Over residues 179–195 (SNNGPLGRSSLNLSSLS) the composition is skewed to low complexity. Polar residues-rich tracts occupy residues 196–218 (HELQ…SSDT) and 225–240 (PPSS…ASQD). The Rho-GAP domain maps to 312–546 (TNLCKFTFPT…GLIIHWPEVL (235 aa)). A disordered region spans residues 692–713 (PVTVTASSETNKKSQKINKKAS). Positions 704 to 713 (KSQKINKKAS) are enriched in basic residues.

The protein is Probable Rho-GTPase-activating protein 6 (rga6) of Schizosaccharomyces pombe (strain 972 / ATCC 24843) (Fission yeast).